The sequence spans 316 residues: Transaldolase (316 aa).

The active-site Schiff-base intermediate with substrate is the K131.

This sequence belongs to the transaldolase family. Type 1 subfamily. In terms of assembly, homodimer.

Its subcellular location is the cytoplasm. It catalyses the reaction D-sedoheptulose 7-phosphate + D-glyceraldehyde 3-phosphate = D-erythrose 4-phosphate + beta-D-fructose 6-phosphate. The protein operates within carbohydrate degradation; pentose phosphate pathway; D-glyceraldehyde 3-phosphate and beta-D-fructose 6-phosphate from D-ribose 5-phosphate and D-xylulose 5-phosphate (non-oxidative stage): step 2/3. In terms of biological role, transaldolase is important for the balance of metabolites in the pentose-phosphate pathway. In Sodalis glossinidius (strain morsitans), this protein is Transaldolase.